A 109-amino-acid chain; its full sequence is Spermidine export protein MdtI (109 aa).

A run of 4 helical transmembrane segments spans residues Phe-6–Leu-26, Val-35–Ala-55, Ala-64–Phe-84, and Leu-88–Leu-108.

It belongs to the drug/metabolite transporter (DMT) superfamily. Small multidrug resistance (SMR) (TC 2.A.7.1) family. MdtI subfamily. Forms a complex with MdtJ.

It is found in the cell inner membrane. In terms of biological role, catalyzes the excretion of spermidine. The sequence is that of Spermidine export protein MdtI from Yersinia enterocolitica serotype O:8 / biotype 1B (strain NCTC 13174 / 8081).